The following is a 397-amino-acid chain: 1-deoxy-D-xylulose 5-phosphate reductoisomerase (397 aa).

NADPH is bound by residues Thr10, Gly11, Ser12, Ile13, Asn39, and Asn125. Lys126 contributes to the 1-deoxy-D-xylulose 5-phosphate binding site. Glu127 provides a ligand contact to NADPH. Residue Asp151 participates in Mn(2+) binding. Ser152, Glu153, Ser187, and His210 together coordinate 1-deoxy-D-xylulose 5-phosphate. A Mn(2+)-binding site is contributed by Glu153. Position 216 (Gly216) interacts with NADPH. Positions 223, 228, 229, and 232 each coordinate 1-deoxy-D-xylulose 5-phosphate. A Mn(2+)-binding site is contributed by Glu232.

This sequence belongs to the DXR family. In terms of assembly, homodimer. Mg(2+) is required as a cofactor. It depends on Mn(2+) as a cofactor.

The enzyme catalyses 2-C-methyl-D-erythritol 4-phosphate + NADP(+) = 1-deoxy-D-xylulose 5-phosphate + NADPH + H(+). The protein operates within isoprenoid biosynthesis; isopentenyl diphosphate biosynthesis via DXP pathway; isopentenyl diphosphate from 1-deoxy-D-xylulose 5-phosphate: step 1/6. In terms of biological role, catalyzes the NADPH-dependent rearrangement and reduction of 1-deoxy-D-xylulose-5-phosphate (DXP) to 2-C-methyl-D-erythritol 4-phosphate (MEP). In Wigglesworthia glossinidia brevipalpis, this protein is 1-deoxy-D-xylulose 5-phosphate reductoisomerase.